We begin with the raw amino-acid sequence, 83 residues long: Evasin P1090 (83 aa).

Residues 1 to 24 (MEVKIFAFLQIAVLIAFSLHLASA) form the signal peptide. Cystine bridges form between cysteine 44–cysteine 63, cysteine 48–cysteine 65, and cysteine 59–cysteine 76. Asparagine 47 is a glycosylation site (N-linked (GlcNAc...) asparagine). N-linked (GlcNAc...) asparagine glycosylation occurs at asparagine 70.

It localises to the secreted. Salivary chemokine-binding protein which binds to host chemokines CXCL1, CXCL2, CXCL3, CXCL5, CXCL6, CXCL10, CXCL11 and CXCL13. The chain is Evasin P1090 from Ixodes ricinus (Common tick).